Consider the following 495-residue polypeptide: COP9 signalosome complex subunit 2 (495 aa).

Residues 1–26 (MGDEYMDDDEDYGFEYEDDSGSEPDV) form a disordered region. The 163-residue stretch at 254–416 (AHTDFFEAFK…GMIEMPKNKK (163 aa)) folds into the PCI domain. The interval 426–468 (PNAGDQGTTKSDSKPGTSSEPSTTTSVTSSILQGPPATSSCHQ) is disordered. Residues 430-441 (DQGTTKSDSKPG) show a composition bias toward polar residues. Residues 442–455 (TSSEPSTTTSVTSS) are compositionally biased toward low complexity.

The protein belongs to the CSN2 family. As to quaternary structure, component of the CSN complex, probably composed of csn-1, csn-2, csn-3, csn-4, csn-5, csn-6 and csn-7. Within the complex it probably interacts directly with csn-1, csn-3 and csn-4.

The protein resides in the cytoplasm. Its subcellular location is the nucleus. Functionally, essential component of the COP9 signalosome complex (CSN), a complex involved in various cellular and developmental processes. The CSN complex is an essential regulator of the ubiquitin (Ubl) conjugation pathway by mediating the deneddylation of the cullin subunits of the SCF-type E3 ligase complexes, leading to decrease the Ubl ligase activity of SCF. The CSN complex plays an essential role in embryogenesis and oogenesis and is required to regulate microtubule stability in the early embryo. Mediates mei-3/katanin targeting for degradation at the meiosis to mitosis transition via deneddylation of cul-3. The polypeptide is COP9 signalosome complex subunit 2 (csn-2) (Caenorhabditis elegans).